The chain runs to 134 residues: MAKAPNNAAAARVRKKVKKNVAEGIAHIHASFNNTIITITDRQGNALSWATSGGAGFKGSRKSTPFAAQVAAEAAGKVAIECGIKNLEVRIKGPGPGRESSVRALNNLGIKITQIQDVTPVPHNGCRPPKRRRI.

Belongs to the universal ribosomal protein uS11 family. In terms of assembly, part of the 30S ribosomal subunit. Interacts with proteins S7 and S18. Binds to IF-3.

Its function is as follows. Located on the platform of the 30S subunit, it bridges several disparate RNA helices of the 16S rRNA. Forms part of the Shine-Dalgarno cleft in the 70S ribosome. The protein is Small ribosomal subunit protein uS11 of Herminiimonas arsenicoxydans.